Here is a 509-residue protein sequence, read N- to C-terminus: NADH dehydrogenase (509 aa).

Residues 1 to 183 form a membrane-binding region; that stretch reads MVLDANIKAQ…YLNGESFGSG (183 aa). The catalytic stretch occupies residues 184–509; that stretch reads RMTLEEILAK…LGAFDYLIRN (326 aa). Residue 210–241 coordinates FAD; that stretch reads DVLVVGGGPAGASAAIYTARKGIRTGVVAERF. An intrachain disulfide couples C337 to C340. 349–379 is a binding site for NAD(+); the sequence is DVAVIGGGNSGIEAAIDLAGIVNHVTVLEFA. An FAD-binding site is contributed by 469–479; sequence TSVPGLFAAGD.

It belongs to the class-II pyridine nucleotide-disulfide oxidoreductase family. In terms of assembly, homodimer. FAD is required as a cofactor.

It localises to the cell membrane. It carries out the reaction a ubiquinone + NADH + 5 H(+)(in) = a ubiquinol + NAD(+) + 4 H(+)(out). Transfer of electrons from NADH to the respiratory chain. The immediate electron acceptor for the enzyme is believed to be ubiquinone. This is NADH dehydrogenase (ahpF) from Bacillus subtilis (strain 168).